A 126-amino-acid chain; its full sequence is Fatty acid-binding protein 1, liver (126 aa).

This sequence belongs to the calycin superfamily. Fatty-acid binding protein (FABP) family.

It is found in the cytoplasm. Binds free fatty acids and their coenzyme A derivatives, bilirubin, and some other small molecules in the cytoplasm. May be involved in intracellular lipid transport. The specificity of axolotl L-FABP differs from that of LB-FABP. The protein is Fatty acid-binding protein 1, liver of Ambystoma mexicanum (Axolotl).